We begin with the raw amino-acid sequence, 638 residues long: Methylmalonyl-CoA mutase small subunit (638 aa).

The span at 1–11 (MSSTDQGTNPA) shows a compositional bias: polar residues. A disordered region spans residues 1 to 34 (MSSTDQGTNPADTDDLTPTTLSLAGDFPKATEEQ).

This sequence belongs to the methylmalonyl-CoA mutase family. As to quaternary structure, heterodimer of an alpha and a beta chain. The cofactor is adenosylcob(III)alamin.

The catalysed reaction is (R)-methylmalonyl-CoA = succinyl-CoA. The protein operates within metabolic intermediate metabolism; propanoyl-CoA degradation; succinyl-CoA from propanoyl-CoA: step 3/3. Functionally, catalyzes the isomerization of succinyl-CoA to methylmalonyl-CoA during synthesis of propionate from tricarboxylic acid-cycle intermediates. The chain is Methylmalonyl-CoA mutase small subunit (mutA) from Propionibacterium freudenreichii subsp. shermanii.